A 264-amino-acid chain; its full sequence is Tropinone reductase homolog At5g06060 (264 aa).

Residue 15–39 coordinates NADP(+); the sequence is LVTGGTRGIGRAVVEELAKFGAKVH. Residue Ser148 participates in substrate binding. The active-site Proton acceptor is the Tyr161.

The protein belongs to the short-chain dehydrogenases/reductases (SDR) family. SDR65C subfamily.

In Arabidopsis thaliana (Mouse-ear cress), this protein is Tropinone reductase homolog At5g06060.